A 467-amino-acid chain; its full sequence is MELEKVHVVLFPYLSKGHMIPMLQLARLLLSHSFAGDISVTVFTTPLNRPFIVDSLSGTKATIVDVPFPDNVPEIPPGVECTDKLPALSSSLFVPFTRATKSMQADFERELMSLPRVSFMVSDGFLWWTQESARKLGFPRLVFFGMNCASTVICDSVFQNQLLSNVKSETEPVSVPEFPWIKVRKCDFVKDMFDPKTTTDPGFKLILDQVTSMNQSQGIIFNTFDDLEPVFIDFYKRKRKLKLWAVGPLCYVNNFLDDEVEEKVKPSWMKWLDEKRDKGCNVLYVAFGSQAEISREQLEEIALGLEESKVNFLWVVKGNEIGKGFEERVGERGMMVRDEWVDQRKILEHESVRGFLSHCGWNSLTESICSEVPILAFPLAAEQPLNAILVVEELRVAERVVAASEGVVRREEIAEKVKELMEGEKGKELRRNVEAYGKMAKKALEEGIGSSRKNLDNLINEFCNNGT.

UDP-alpha-D-glucose contacts are provided by residues serine 289, 341 to 343 (VDQ), 358 to 366 (HCGWNSLTE), and 380 to 383 (AAEQ).

This sequence belongs to the UDP-glycosyltransferase family.

The protein is UDP-glycosyltransferase 90A2 (UGT90A2) of Arabidopsis thaliana (Mouse-ear cress).